The chain runs to 577 residues: Proline--tRNA ligase (577 aa).

The protein belongs to the class-II aminoacyl-tRNA synthetase family. ProS type 1 subfamily. Homodimer.

It localises to the cytoplasm. It carries out the reaction tRNA(Pro) + L-proline + ATP = L-prolyl-tRNA(Pro) + AMP + diphosphate. Catalyzes the attachment of proline to tRNA(Pro) in a two-step reaction: proline is first activated by ATP to form Pro-AMP and then transferred to the acceptor end of tRNA(Pro). As ProRS can inadvertently accommodate and process non-cognate amino acids such as alanine and cysteine, to avoid such errors it has two additional distinct editing activities against alanine. One activity is designated as 'pretransfer' editing and involves the tRNA(Pro)-independent hydrolysis of activated Ala-AMP. The other activity is designated 'posttransfer' editing and involves deacylation of mischarged Ala-tRNA(Pro). The misacylated Cys-tRNA(Pro) is not edited by ProRS. This Chlamydia caviae (strain ATCC VR-813 / DSM 19441 / 03DC25 / GPIC) (Chlamydophila caviae) protein is Proline--tRNA ligase.